The chain runs to 451 residues: Tubulin gamma-1 chain (451 aa).

142 to 148 is a binding site for GTP; the sequence is AGGTGSG.

The protein belongs to the tubulin family.

It localises to the cytoplasm. It is found in the cytoskeleton. Its subcellular location is the microtubule organizing center. The protein localises to the centrosome. The protein resides in the spindle. Tubulin is the major constituent of microtubules. The gamma chain is found at microtubule organizing centers (MTOC) such as the spindle poles or the centrosome, suggesting that it is involved in the minus-end nucleation of microtubule assembly. This chain is Tubulin gamma-1 chain (tubg1), found in Xenopus laevis (African clawed frog).